The following is a 235-amino-acid chain: Ribonuclease 3 (235 aa).

Residues 7 to 135 form the RNase III domain; that stretch reads FAALEARLGH…VVAAVYLDGG (129 aa). Glutamate 48 lines the Mg(2+) pocket. Aspartate 52 is an active-site residue. Positions 121 and 124 each coordinate Mg(2+). Glutamate 124 is an active-site residue. The region spanning 160-229 is the DRBM domain; sequence DPKTVLQEWA…ASAFLAREGV (70 aa).

The protein belongs to the ribonuclease III family. In terms of assembly, homodimer. Mg(2+) serves as cofactor.

The protein localises to the cytoplasm. The catalysed reaction is Endonucleolytic cleavage to 5'-phosphomonoester.. In terms of biological role, digests double-stranded RNA. Involved in the processing of primary rRNA transcript to yield the immediate precursors to the large and small rRNAs (23S and 16S). Processes some mRNAs, and tRNAs when they are encoded in the rRNA operon. Processes pre-crRNA and tracrRNA of type II CRISPR loci if present in the organism. This Azorhizobium caulinodans (strain ATCC 43989 / DSM 5975 / JCM 20966 / LMG 6465 / NBRC 14845 / NCIMB 13405 / ORS 571) protein is Ribonuclease 3.